The sequence spans 737 residues: ARMADILLO BTB ARABIDOPSIS PROTEIN 1 (737 aa).

9 ARM repeats span residues 112–154 (DENV…KDCA), 165–212 (PGYQ…NIAH), 215–254 (PRIK…TVSF), 257–296 (DENK…NLVH), 299–338 (PDIK…QFAA), 341–380 (SDCK…RLAQ), 382–421 (AHNQ…GLAD), 456–495 (LKRL…HLCD), and 497–536 (KDGK…ELAK). The 68-residue stretch at 568–635 (SDVTFLIDGK…IYSGRINIAK (68 aa)) folds into the BTB domain.

In terms of assembly, forms a heterodimeric complex with TCP24. Interacts with the origin recognition complex (preRC) components ORC1A, ORC1B, CDT1A and CDT1B. Interacts with DUF7/AIP1. As to expression, weakly expressed in the emerging lateral roots and mainly expressed in the shoot apex, young leaves and flower buds.

It is found in the nucleus. The protein operates within protein modification; protein ubiquitination. Its function is as follows. May act as a substrate-specific adapter of an E3 ubiquitin-protein ligase complex (CUL3-RBX1-BTB) which mediates the ubiquitination and subsequent proteasomal degradation of target proteins. In association with TCP24, exerts a negative role in cell proliferation in leaves, possibly by inhibiting mitotic DNA replication. In Arabidopsis thaliana (Mouse-ear cress), this protein is ARMADILLO BTB ARABIDOPSIS PROTEIN 1 (ABAP1).